Here is a 380-residue protein sequence, read N- to C-terminus: Glucose-1-phosphate adenylyltransferase (380 aa).

Alpha-D-glucose 1-phosphate-binding positions include Gly-164, 179 to 180 (EK), and Ser-190.

It belongs to the bacterial/plant glucose-1-phosphate adenylyltransferase family. In terms of assembly, homotetramer.

It carries out the reaction alpha-D-glucose 1-phosphate + ATP + H(+) = ADP-alpha-D-glucose + diphosphate. It functions in the pathway glycan biosynthesis; glycogen biosynthesis. Its function is as follows. Involved in the biosynthesis of ADP-glucose, a building block required for the elongation reactions to produce glycogen. Catalyzes the reaction between ATP and alpha-D-glucose 1-phosphate (G1P) to produce pyrophosphate and ADP-Glc. This Lactococcus lactis subsp. lactis (strain IL1403) (Streptococcus lactis) protein is Glucose-1-phosphate adenylyltransferase.